A 122-amino-acid polypeptide reads, in one-letter code: uncharacterized protein (122 aa).

4 consecutive transmembrane segments (helical) span residues 7-27, 29-49, 62-82, and 89-109; these read IVAI…IFCD, LVLA…LGWI, AITG…SKNP, and KEIF…YFGY.

It is found in the cell membrane. This is an uncharacterized protein from Methanocaldococcus jannaschii (strain ATCC 43067 / DSM 2661 / JAL-1 / JCM 10045 / NBRC 100440) (Methanococcus jannaschii).